A 107-amino-acid chain; its full sequence is Thioredoxin-1 (107 aa).

Residues 2-106 form the Thioredoxin domain; it reads ASVRTMNDYH…LTNMMAKLVK (105 aa). Residues cysteine 31 and cysteine 34 each act as nucleophile in the active site. Cysteine 31 and cysteine 34 are joined by a disulfide.

The protein belongs to the thioredoxin family. As to expression, ovary specific. Expressed present in the nurse cells from stage 9 of ovary development and is transported into the oocyte. Expressed throughout oogenesis.

Its subcellular location is the nucleus. Its function is as follows. Participates in various redox reactions through the reversible oxidation of its active center dithiol to a disulfide and catalyzes dithiol-disulfide exchange reactions. As a reducing substrate of peroxiredoxin 1, thioredoxin 2 is preferred over thioredoxin 1. Required for female meiosis and early embryonic development. The polypeptide is Thioredoxin-1 (dhd) (Drosophila melanogaster (Fruit fly)).